We begin with the raw amino-acid sequence, 361 residues long: Protein RecA (361 aa).

77 to 84 (GPESSGKT) contacts ATP.

Belongs to the RecA family.

The protein resides in the cytoplasm. Can catalyze the hydrolysis of ATP in the presence of single-stranded DNA, the ATP-dependent uptake of single-stranded DNA by duplex DNA, and the ATP-dependent hybridization of homologous single-stranded DNAs. It interacts with LexA causing its activation and leading to its autocatalytic cleavage. The polypeptide is Protein RecA (Rhizobium etli).